The following is a 504-amino-acid chain: Catalase (504 aa).

A signal peptide spans 1-21 (MQMSKSFLLITVGLASTSLQA). Residues His72 and Asn145 contribute to the active site. Tyr353 contacts heme.

It belongs to the catalase family. Heme is required as a cofactor.

It localises to the periplasm. It carries out the reaction 2 H2O2 = O2 + 2 H2O. In terms of biological role, decomposes hydrogen peroxide into water and oxygen; serves to protect cells from the toxic effects of hydrogen peroxide. The protein is Catalase of Vibrio parahaemolyticus serotype O3:K6 (strain RIMD 2210633).